Here is a 308-residue protein sequence, read N- to C-terminus: Homoserine kinase (308 aa).

Residue 85–95 coordinates ATP; the sequence is PLTRGLGSSAA.

Belongs to the GHMP kinase family. Homoserine kinase subfamily.

The protein resides in the cytoplasm. It catalyses the reaction L-homoserine + ATP = O-phospho-L-homoserine + ADP + H(+). Its pathway is amino-acid biosynthesis; L-threonine biosynthesis; L-threonine from L-aspartate: step 4/5. Functionally, catalyzes the ATP-dependent phosphorylation of L-homoserine to L-homoserine phosphate. This is Homoserine kinase from Caldicellulosiruptor saccharolyticus (strain ATCC 43494 / DSM 8903 / Tp8T 6331).